Here is a 255-residue protein sequence, read N- to C-terminus: Putative enoyl-CoA hydratase/isomerase YhaR (255 aa).

Helical transmembrane passes span 96–116 (VTIA…ALCA) and 126–146 (VLAM…HYLL).

This sequence belongs to the enoyl-CoA hydratase/isomerase family.

It is found in the cell membrane. This is Putative enoyl-CoA hydratase/isomerase YhaR (yhaR) from Bacillus subtilis (strain 168).